The chain runs to 356 residues: Leucine-rich repeat and transmembrane domain-containing protein 1 (356 aa).

The signal sequence occupies residues Met-1 to Ser-32. The LRRNT domain maps to Cys-33–Pro-62. At Cys-33–Thr-299 the chain is on the extracellular side. LRR repeat units lie at residues Trp-63 to Ser-84, Leu-87 to Gly-108, His-111 to Ala-132, Gly-135 to Pro-156, and Asn-159 to Ala-180. Asn-92 and Asn-116 each carry an N-linked (GlcNAc...) asparagine glycan. Asn-159 carries an N-linked (GlcNAc...) asparagine glycan. The 55-residue stretch at Asn-192–Leu-246 folds into the LRRCT domain. Over residues Leu-255–Gln-277 the composition is skewed to polar residues. The disordered stretch occupies residues Leu-255 to Pro-288. A helical transmembrane segment spans residues Val-300–Tyr-320. Residues Gly-321–Ala-356 are Cytoplasmic-facing.

The protein localises to the membrane. The protein is Leucine-rich repeat and transmembrane domain-containing protein 1 (Lrtm1) of Mus musculus (Mouse).